We begin with the raw amino-acid sequence, 185 residues long: Ribosome-recycling factor (185 aa).

It belongs to the RRF family.

It localises to the cytoplasm. Responsible for the release of ribosomes from messenger RNA at the termination of protein biosynthesis. May increase the efficiency of translation by recycling ribosomes from one round of translation to another. This is Ribosome-recycling factor from Shewanella denitrificans (strain OS217 / ATCC BAA-1090 / DSM 15013).